The chain runs to 373 residues: Muscleblind-like protein 2 (373 aa).

4 C3H1-type zinc fingers span residues 13–41 (WLTL…HPPK), 47–73 (NGRV…HPPT), 176–204 (TDKL…HPAD), and 212–238 (DNTV…HPPA).

It belongs to the muscleblind family. As to quaternary structure, interacts with ITGA3. In terms of tissue distribution, expressed in heart, brain, placenta, lung, liver, skeletal muscle, kidney and pancreas.

It localises to the nucleus. The protein resides in the cytoplasm. In terms of biological role, mediates pre-mRNA alternative splicing regulation. Acts either as activator or repressor of splicing on specific pre-mRNA targets. Inhibits cardiac troponin-T (TNNT2) pre-mRNA exon inclusion but induces insulin receptor (IR) pre-mRNA exon inclusion in muscle. Antagonizes the alternative splicing activity pattern of CELF proteins. RNA-binding protein that binds to 5'ACACCC-3' core sequence, termed zipcode, within the 3'UTR of ITGA3. Binds to CUG triplet repeat expansion in myotonic dystrophy muscle cells by sequestering the target RNAs. Together with RNA binding proteins RBPMS and RBFOX2, activates vascular smooth muscle cells alternative splicing events. Regulates NCOR2 alternative splicing. Seems to regulate expression and localization of ITGA3 by transporting it from the nucleus to cytoplasm at adhesion plaques. May play a role in myotonic dystrophy pathophysiology (DM). The protein is Muscleblind-like protein 2 (MBNL2) of Homo sapiens (Human).